The following is a 546-amino-acid chain: Chaperonin GroEL (546 aa).

Residues 30–33 (TLGP), Lys-51, 87–91 (DGTTT), Gly-415, 479–481 (NAA), and Asp-495 each bind ATP. Residues 526–546 (KKDEPAMPAGGGMGGMGGMDF) are disordered. A compositionally biased stretch (gly residues) spans 534-546 (AGGGMGGMGGMDF).

It belongs to the chaperonin (HSP60) family. As to quaternary structure, forms a cylinder of 14 subunits composed of two heptameric rings stacked back-to-back. Interacts with the co-chaperonin GroES.

It is found in the cytoplasm. It carries out the reaction ATP + H2O + a folded polypeptide = ADP + phosphate + an unfolded polypeptide.. In terms of biological role, together with its co-chaperonin GroES, plays an essential role in assisting protein folding. The GroEL-GroES system forms a nano-cage that allows encapsulation of the non-native substrate proteins and provides a physical environment optimized to promote and accelerate protein folding. This Xanthomonas oryzae pv. oryzae (strain MAFF 311018) protein is Chaperonin GroEL.